The chain runs to 852 residues: MPENLSSALETFKQQRNAAEAHYLKANRVSVFFREYTAAVETLLAALWAEHFQNSALCLMAVGGFGRGEPYPCSDVDLAVVSPAPLSDGIQEQIARFIQTLWDCKLMPSVKSGSVDELCESVRDDITGDTAFLEARFLFGNRQTADELAEKMNVQRNVAAFIEAKLVEMEHRHAKSQGSGAVLEPNIKSCPGGLRDIHTLLWIAKAQGLAANLPDLLKQRILTRAEAGMLSHGYRRLAHIRIRLHLNAKRAEDRLLFDLQPQVAESMGYQDENRRRQSEELMRVFYRAVKTVKQLGGILTPMLRSRVSSTPMRVTLRIDDDYIQVNNQIAARHTDIFFRRPEHIFKIVEIMQQRNDITALEPQTLRAWWGATRKINRSFYQNSENRRRFAGFFRSGNGLTQTLRFLNLYGVLGRYLPAWEKIVGLLQHDLFHIYPVDDHILAVVRNVRRLALDMHSHELPYASALMQSFEKQDILYLAAFFHDIAKGRGGDHAVQGIADARQFAADHFLTEEESDLLAWLVENHLLMSAVAQKEDIQDPGVLDAFCKRVQTHERLSALYLLTISDIRGTNPKLWNAWRASLLESLFHAAGRCLAGNDGNPHALFGRRRQEAADLLTRAAVPEKQQKKLWNALGSAYFARHQSREILWHAANLVHDFEPPIVRSRILPQSDSFQVMVFMPNGPRLFARLCRIFSRHGFDILAARAFITEHDYILDTFIVQIPSQHAPEDYPDIQSALEAELNSFIHGHTVAETQSCNRRISRRSRYMPIAPSITITPEEDYPDRYSVEITAVNRPFLLADMAEVFFAHNVSLRYAKISTLDERVEDSFTVFSPDLKNPKIQSSLKQALLEQLA.

Positions 1–318 are uridylyltransferase; it reads MPENLSSALE…STPMRVTLRI (318 aa). The segment at 319–672 is uridylyl-removing; the sequence is DDDYIQVNNQ…SRILPQSDSF (354 aa). The HD domain occupies 436–558; it reads VDDHILAVVR…VQTHERLSAL (123 aa). ACT domains are found at residues 673–757 and 785–852; these read QVMV…SCNR and SVEI…EQLA.

It belongs to the GlnD family. Requires Mg(2+) as cofactor.

It carries out the reaction [protein-PII]-L-tyrosine + UTP = [protein-PII]-uridylyl-L-tyrosine + diphosphate. The catalysed reaction is [protein-PII]-uridylyl-L-tyrosine + H2O = [protein-PII]-L-tyrosine + UMP + H(+). Uridylyltransferase (UTase) activity is inhibited by glutamine, while glutamine activates uridylyl-removing (UR) activity. In terms of biological role, modifies, by uridylylation and deuridylylation, the PII regulatory proteins (GlnB and homologs), in response to the nitrogen status of the cell that GlnD senses through the glutamine level. Under low glutamine levels, catalyzes the conversion of the PII proteins and UTP to PII-UMP and PPi, while under higher glutamine levels, GlnD hydrolyzes PII-UMP to PII and UMP (deuridylylation). Thus, controls uridylylation state and activity of the PII proteins, and plays an important role in the regulation of nitrogen assimilation and metabolism. The sequence is that of Bifunctional uridylyltransferase/uridylyl-removing enzyme from Neisseria gonorrhoeae (strain NCCP11945).